Consider the following 467-residue polypeptide: Asparagine--tRNA ligase (467 aa).

Belongs to the class-II aminoacyl-tRNA synthetase family. Homodimer.

The protein localises to the cytoplasm. It catalyses the reaction tRNA(Asn) + L-asparagine + ATP = L-asparaginyl-tRNA(Asn) + AMP + diphosphate + H(+). The chain is Asparagine--tRNA ligase from Legionella pneumophila (strain Paris).